The primary structure comprises 134 residues: Large ribosomal subunit protein eL14z (134 aa).

The protein belongs to the eukaryotic ribosomal protein eL14 family.

This Arabidopsis thaliana (Mouse-ear cress) protein is Large ribosomal subunit protein eL14z (RPL14A).